The following is a 679-amino-acid chain: Probable metal-nicotianamine transporter YSL18 (679 aa).

A compositionally biased stretch (basic and acidic residues) spans 1–17; the sequence is MESVGDPRDGPSTERAF. The segment at 1–21 is disordered; that stretch reads MESVGDPRDGPSTERAFEGQP. The next 14 membrane-spanning stretches (helical) occupy residues 29-49, 51-71, 101-121, 144-164, 211-231, 255-275, 309-329, 379-399, 407-427, 441-461, 497-517, 547-567, 593-613, and 627-647; these read VTLR…SVMM, LVFT…LGFF, CVVA…LLAM, FGRM…AIVP, LASL…NCGF, VGIG…GSII, VFCA…AISL, FAIS…PLMY, VAAA…GTGV, ILMF…SLVI, VIGT…FHHF, LPKY…AVCA, FLLV…VFLW, and VLAS…ALLA.

Belongs to the YSL (TC 2.A.67.2) family.

Its subcellular location is the membrane. May be involved in the transport of nicotianamine-chelated metals. The chain is Probable metal-nicotianamine transporter YSL18 (YSL18) from Oryza sativa subsp. japonica (Rice).